The chain runs to 652 residues: Beta-mannosyltransferase 1 (652 aa).

Residues 1–15 (MVDLFQWLKFYSMRR) are Cytoplasmic-facing. Residues 16-34 (LGQVAITLVLLNLFVFLGY) traverse the membrane as a helical segment. Residues 35 to 652 (KFTPSTVIGS…LYQLQEEERS (618 aa)) lie on the Extracellular side of the membrane. The N-linked (GlcNAc...) asparagine glycan is linked to N57. Residues 535-652 (PARYAKQMEN…LYQLQEEERS (118 aa)) adopt a coiled-coil conformation. The interval 536-621 (ARYAKQMENE…EAKENEAKKK (86 aa)) is disordered.

It belongs to the BMT family.

Its subcellular location is the membrane. Its function is as follows. Beta-mannosyltransferase involved in cell wall biosynthesis. Involved in the beta-mannosylation of outer chains of N-glycans. This is Beta-mannosyltransferase 1 (BMT1) from Komagataella phaffii (strain ATCC 76273 / CBS 7435 / CECT 11047 / NRRL Y-11430 / Wegner 21-1) (Yeast).